The sequence spans 160 residues: Glyoxalase domain-containing protein 5 (160 aa).

Residues 33-153 (RLDHLVLTVR…DHNLIEVSNY (121 aa)) form the VOC domain.

Belongs to the glyoxalase I family.

The protein is Glyoxalase domain-containing protein 5 (glod5) of Xenopus laevis (African clawed frog).